The following is a 428-amino-acid chain: Elongation factor 1-alpha (428 aa).

In terms of domain architecture, tr-type G spans 5–215 (KPHVNIVFIG…ALDQIPEPPK (211 aa)). Positions 14–21 (GHVDHGKS) are G1. Residue 14 to 21 (GHVDHGKS) coordinates GTP. Residue S21 coordinates Mg(2+). The interval 68 to 72 (GITID) is G2. Residues 89-92 (DAPG) form a G3 region. GTP-binding positions include 89–93 (DAPGH) and 144–147 (NKMD). The tract at residues 144 to 147 (NKMD) is G4. The G5 stretch occupies residues 181–183 (SAW).

This sequence belongs to the TRAFAC class translation factor GTPase superfamily. Classic translation factor GTPase family. EF-Tu/EF-1A subfamily.

The protein resides in the cytoplasm. The enzyme catalyses GTP + H2O = GDP + phosphate + H(+). Functionally, GTP hydrolase that promotes the GTP-dependent binding of aminoacyl-tRNA to the A-site of ribosomes during protein biosynthesis. The chain is Elongation factor 1-alpha from Thermococcus gammatolerans (strain DSM 15229 / JCM 11827 / EJ3).